The following is a 371-amino-acid chain: 4-hydroxy-3-methylbut-2-en-1-yl diphosphate synthase (flavodoxin) (371 aa).

Positions 268, 271, 303, and 310 each coordinate [4Fe-4S] cluster.

This sequence belongs to the IspG family. The cofactor is [4Fe-4S] cluster.

The enzyme catalyses (2E)-4-hydroxy-3-methylbut-2-enyl diphosphate + oxidized [flavodoxin] + H2O + 2 H(+) = 2-C-methyl-D-erythritol 2,4-cyclic diphosphate + reduced [flavodoxin]. Its pathway is isoprenoid biosynthesis; isopentenyl diphosphate biosynthesis via DXP pathway; isopentenyl diphosphate from 1-deoxy-D-xylulose 5-phosphate: step 5/6. In terms of biological role, converts 2C-methyl-D-erythritol 2,4-cyclodiphosphate (ME-2,4cPP) into 1-hydroxy-2-methyl-2-(E)-butenyl 4-diphosphate. This is 4-hydroxy-3-methylbut-2-en-1-yl diphosphate synthase (flavodoxin) from Lysinibacillus sphaericus (strain C3-41).